The sequence spans 201 residues: Small ribosomal subunit protein uS4c (201 aa).

The interval 15–43 (LGALPGLTSKRPRSGSDLRNQSRSGKRSQ) is disordered. The region spanning 89–150 (MRLDNILFRL…KERSRALIQN (62 aa)) is the S4 RNA-binding domain.

The protein belongs to the universal ribosomal protein uS4 family. In terms of assembly, part of the 30S ribosomal subunit. Contacts protein S5. The interaction surface between S4 and S5 is involved in control of translational fidelity.

The protein localises to the plastid. The protein resides in the chloroplast. In terms of biological role, one of the primary rRNA binding proteins, it binds directly to 16S rRNA where it nucleates assembly of the body of the 30S subunit. Its function is as follows. With S5 and S12 plays an important role in translational accuracy. This chain is Small ribosomal subunit protein uS4c (rps4), found in Amborella trichopoda.